The sequence spans 231 residues: Small ribosomal subunit protein uS3 (231 aa).

The region spanning 39–107 (VREFLKEKLK…PAQINIAEVR (69 aa)) is the KH type-2 domain.

This sequence belongs to the universal ribosomal protein uS3 family. As to quaternary structure, part of the 30S ribosomal subunit. Forms a tight complex with proteins S10 and S14.

Its function is as follows. Binds the lower part of the 30S subunit head. Binds mRNA in the 70S ribosome, positioning it for translation. This Colwellia psychrerythraea (strain 34H / ATCC BAA-681) (Vibrio psychroerythus) protein is Small ribosomal subunit protein uS3.